A 369-amino-acid chain; its full sequence is Transcription factor GTE6 (369 aa).

One can recognise a Bromo domain in the interval 89–198; sequence KRMQDLMRQF…EKFEEKWAHF (110 aa). A coiled-coil region spans residues 201-263; that stretch reads KVQEEEKIRE…VERCRKITIE (63 aa). In terms of domain architecture, NET spans 250-331; the sequence is MRKVVERCRK…DALDNAMKKK (82 aa). Over residues 329-348 the composition is skewed to basic and acidic residues; it reads KKKKEEETKTRELSGAQKKE. Positions 329–369 are disordered; that stretch reads KKKKEEETKTRELSGAQKKEVSKKRNATTKLAERKTKRSRI. The Bipartite nuclear localization signal motif lies at 351-368; that stretch reads KKRNATTKLAERKTKRSR.

As to expression, abundantly expressed in flowers. Weakly expressed in roots, leaves and siliques; and undetectable in 5-day-old seedlings. In the basal rosette leaves of 21-day-old plants, it is more abundant in leaves 6 and 7, which possess narrow elliptical laminae, than in leaves 1-4, which have round laminae, suggesting a possible correlation between its expression and the formation of elliptical leaf laminae in mature leaves.

The protein resides in the nucleus. Regulates differences in leaf patterning between juvenile and mature leaves by controlling differences in the development of primordia produced during juvenile and mature phases. Acts by activating transcription of the myb-domain protein AS1, a gene involved in leaf-axis specification. Associates with the promoter and the start of the transcribed region of AS1 and up-regulates expression of AS1 through acetylation of histones H3 and H4. This is Transcription factor GTE6 (GTE6) from Arabidopsis thaliana (Mouse-ear cress).